Consider the following 559-residue polypeptide: MAAKLRAHQVDVDPDFAPQSRPRSCTWPLPQPDLAGDEDGALGAGVAEGSEDCGPERRATAPAMAPAPPLGAEVGPLRKAKSSRRNAWGNLSYADLITKAIESAPDKRLTLSQIYDWMVRYVPYFKDKGDSNSSAGWKNSIRHNLSLHTRFIRVQNEGTGKSSWWMLNPEGGKTGKTPRRRAVSMDNGAKFLRIKGKASKKKQLHLPERSPDDSPPGAPVPGPLSASAKWAASPASHASDDYEAWADFRGSRRPLLGEAAELEDDEALEALAPSSPLMYPSPASALSPALGARCPGELPRLAELGGPLGLHGGGVAGLPDALLDGAQDAYGPRARAGTPSYFGSCKASAYGGGGGFGPPALGSLRRLPMQTIQENKQASFVQAAAPFRPGALPALLPPPPPAPRPGPLLGAPGELALAGAAAAYPGKGAAPYAPPAPSRSALAHPISLMTLPGEAGAAGLAPPAHAAAFGGPPGGLLLDALPGPYAAAAAGPLGAGPDRFPADLDLDMFSGSLECDVESIILNDFMDSDEMDFNFDSALPPPPPGLAGAPPPNQSWVPG.

Disordered stretches follow at residues 1-77 (MAAK…VGPL) and 163-183 (SWWM…RRAV). The segment at residues 88-182 (WGNLSYADLI…KTGKTPRRRA (95 aa)) is a DNA-binding region (fork-head). Serine 184 is modified (phosphoserine). 2 disordered regions span residues 197–232 (KASK…KWAA) and 534–559 (NFDS…WVPG). 2 stretches are compositionally biased toward pro residues: residues 213-222 (DSPPGAPVPG) and 539-553 (LPPP…PPPN).

In terms of processing, phosphorylation of Ser-184 is be important in regulating the transacriptional activity. Expressed in brain in areas of the nucleus accumbens, cingulate cortex, parts of the amygdala and in the hippocampus.

The protein resides in the cytoplasm. Its subcellular location is the nucleus. Functionally, transcriptional activator. This chain is Forkhead box protein O6 (Foxo6), found in Mus musculus (Mouse).